The sequence spans 663 residues: MISVQSTETIQKVLENEGDQQFDKEVVQNSDSNIETGQISDSLTKAVEERAETESSSNLSNFTTSESESSKPAYCFNSHSQNMAEGSISIPVISHSMNVENEVSTAEGQDSRTGESENDQNAMIVRSIWDIEKASLLVNDCQNIANMAEQKVMMVSAIFSESSKDIVNPESFSERLGKETVKDLYEFNEQLTTKYGLEFRTIFFSYIRKYDAYWCLFEDLEKPLKSIQFFTGLIDLLDNTNKHLTLRSIVLDALLSADEEDSFYGDALVLFEELVIRYFGTDSNPSIDASEFILSCLPYTSLDALNVVCGQVWKSQKICDFLKSTIGNTSNSPLQLRASFPAFVNAVIHFLLEFKNVRRLERKDLSVKGMLYDSDSQQILNRLRERVSGSTAQSADEASGHESDASEDTFSERTLGLNSIDNTEISEVVSLGLVSSALDKITGLLSADNLSETVSQARDFSHTLSKSLKSRAKSLSQKEAANRSKLIAKRGDNLRREASLSSEQDDLSEDFPPVRESDEQESRSGGRSSAMRVSIERSAARSGTRRSQGNPYEGYRTRRKWTDEEENELYEMISQHGCCWSKIIHIQKLENGPLKTFGPTQIKDKARLIKARFMKQNRLQELYSKSLNWKNVTVGQAYCELHKIPYIEATPPLLREELVNYQS.

A disordered region spans residues 15–72; it reads ENEGDQQFDKEVVQNSDSNIETGQISDSLTKAVEERAETESSSNLSNFTTSESESSKP. 2 stretches are compositionally biased toward polar residues: residues 27–43 and 54–67; these read VQNS…SDSL and ESSS…TSES. Phosphoserine is present on Ser332. Disordered stretches follow at residues 389 to 412 and 471 to 554; these read GSTA…TFSE and RAKS…PYEG. Composition is skewed to basic and acidic residues over residues 489–498 and 512–524; these read KRGDNLRREA and PPVR…ESRS. Residues 556 to 612 enclose the Myb-like domain; the sequence is RTRRKWTDEEENELYEMISQHGCCWSKIIHIQKLENGPLKTFGPTQIKDKARLIKAR.

As to quaternary structure, interacts with taf1 via the Myb domain, and ccq1.

The protein localises to the cytoplasm. It is found in the nucleus. It localises to the chromosome. The protein resides in the telomere. In terms of biological role, regulates telomere length and function. Required for the repression of telomere-adjacent gene expression and for normal meiosis or sporulation. It may be a negative regulator of the telomere-replicating enzyme, telomerase, or may protect against activation of telomerase-independent pathways of telomere elongation. It may be involved in the interactions between chromosomes and spindle proteins, disruption of these interactions would lead to defective meiosis. The sequence is that of Telomere length regulator taz1 (taz1) from Schizosaccharomyces pombe (strain 972 / ATCC 24843) (Fission yeast).